We begin with the raw amino-acid sequence, 497 residues long: Glycerol kinase (497 aa).

Residue threonine 12 participates in ADP binding. Residues threonine 12, threonine 13, and serine 14 each contribute to the ATP site. Threonine 12 contributes to the sn-glycerol 3-phosphate binding site. Residue arginine 16 participates in ADP binding. Arginine 82, glutamate 83, tyrosine 134, and aspartate 243 together coordinate sn-glycerol 3-phosphate. Residues arginine 82, glutamate 83, tyrosine 134, aspartate 243, and glutamine 244 each coordinate glycerol. ADP is bound by residues threonine 265 and glycine 308. Threonine 265, glycine 308, glutamine 312, and glycine 411 together coordinate ATP. Glycine 411 serves as a coordination point for ADP.

Belongs to the FGGY kinase family.

It catalyses the reaction glycerol + ATP = sn-glycerol 3-phosphate + ADP + H(+). It functions in the pathway polyol metabolism; glycerol degradation via glycerol kinase pathway; sn-glycerol 3-phosphate from glycerol: step 1/1. With respect to regulation, inhibited by fructose 1,6-bisphosphate (FBP). Its function is as follows. Key enzyme in the regulation of glycerol uptake and metabolism. Catalyzes the phosphorylation of glycerol to yield sn-glycerol 3-phosphate. The protein is Glycerol kinase of Sinorhizobium fredii (strain NBRC 101917 / NGR234).